The chain runs to 204 residues: Pyridoxal 5'-phosphate synthase subunit PdxT (204 aa).

Position 52–54 (52–54 (GES)) interacts with L-glutamine. Cys-84 serves as the catalytic Nucleophile. L-glutamine contacts are provided by residues Arg-116 and 143 to 144 (IR). Active-site charge relay system residues include His-184 and Glu-186.

This sequence belongs to the glutaminase PdxT/SNO family. In the presence of PdxS, forms a dodecamer of heterodimers. Only shows activity in the heterodimer.

The catalysed reaction is aldehydo-D-ribose 5-phosphate + D-glyceraldehyde 3-phosphate + L-glutamine = pyridoxal 5'-phosphate + L-glutamate + phosphate + 3 H2O + H(+). The enzyme catalyses L-glutamine + H2O = L-glutamate + NH4(+). It participates in cofactor biosynthesis; pyridoxal 5'-phosphate biosynthesis. Its function is as follows. Catalyzes the hydrolysis of glutamine to glutamate and ammonia as part of the biosynthesis of pyridoxal 5'-phosphate. The resulting ammonia molecule is channeled to the active site of PdxS. In Pyrobaculum arsenaticum (strain DSM 13514 / JCM 11321 / PZ6), this protein is Pyridoxal 5'-phosphate synthase subunit PdxT.